The following is a 350-amino-acid chain: Homeobox-leucine zipper protein HOX5 (350 aa).

Positions 83 to 142 (APEKKRRLTAEQVQMLERSFEEENKLEPERKTELARRLGMAPRQVAVWFQNRRARWKTKQ) form a DNA-binding region, homeobox. The leucine-zipper stretch occupies residues 141 to 185 (KQLEHDFDRLKAAYDALAADHHALLSDNDRLRAQVISLTEKLQDK). A disordered region spans residues 180-254 (EKLQDKETSP…TNDDGDGGGA (75 aa)). Residues 188 to 198 (SPSSATITTAA) show a composition bias toward low complexity.

The protein belongs to the HD-ZIP homeobox family. Class I subfamily. As to quaternary structure, homodimer. May form a heterodimer with HOX4. Expressed in seedlings, roots, leaves, nodes, internodes, flowers and embryo.

The protein localises to the nucleus. In terms of biological role, probable transcription activator that binds to the DNA sequence 5'-CAAT[AT]ATTG-3'. This is Homeobox-leucine zipper protein HOX5 (HOX5) from Oryza sativa subsp. indica (Rice).